Reading from the N-terminus, the 360-residue chain is Protein phosphatase 1L (360 aa).

Residues 1 to 25 (MIEDTMTLLSLLGRIMRYFLLRPET) lie on the Extracellular side of the membrane. The helical transmembrane segment at 26-42 (LFLLCISLALWSYFFHT) threads the bilayer. At 43–360 (DEVKTIVKSS…FRNSSKTEEQ (318 aa)) the chain is on the cytoplasmic side. Positions 92 to 351 (NVAVYSIQGR…DNITVMVVKF (260 aa)) constitute a PPM-type phosphatase domain. Mn(2+) contacts are provided by Asp128, Gly129, Asp302, and Asp342.

Belongs to the PP2C family. Interacts with MAP3K7/TAK1. Interacts with MAP3K5. Mg(2+) is required as a cofactor. Mn(2+) serves as cofactor. Ubiquitous. Highly expressed in heart, placenta, lung, liver, kidney and pancreas.

Its subcellular location is the membrane. The catalysed reaction is O-phospho-L-seryl-[protein] + H2O = L-seryl-[protein] + phosphate. It carries out the reaction O-phospho-L-threonyl-[protein] + H2O = L-threonyl-[protein] + phosphate. In terms of biological role, acts as a suppressor of the SAPK signaling pathways by associating with and dephosphorylating MAP3K7/TAK1 and MAP3K5, and by attenuating the association between MAP3K7/TAK1 and MAP2K4 or MAP2K6. This Homo sapiens (Human) protein is Protein phosphatase 1L (PPM1L).